The primary structure comprises 56 residues: MAVQKNRKTRSKRGMRRSHDALTTAALSVDATSGETHLRHNVTAEGYYRGQKVINK.

The span at 1 to 16 (MAVQKNRKTRSKRGMR) shows a compositional bias: basic residues. Residues 1–28 (MAVQKNRKTRSKRGMRRSHDALTTAALS) form a disordered region.

The protein belongs to the bacterial ribosomal protein bL32 family.

In Vibrio campbellii (strain ATCC BAA-1116), this protein is Large ribosomal subunit protein bL32.